The chain runs to 357 residues: Probable dual-specificity RNA methyltransferase RlmN (357 aa).

E95 (proton acceptor) is an active-site residue. One can recognise a Radical SAM core domain in the interval 106 to 340 (NRDRHTVCVS…VSVREEKGTD (235 aa)). An intrachain disulfide couples C113 to C345. C120, C124, and C127 together coordinate [4Fe-4S] cluster. Residues 172-173 (GE), S204, 227-229 (SLH), and N302 each bind S-adenosyl-L-methionine. C345 (S-methylcysteine intermediate) is an active-site residue.

The protein belongs to the radical SAM superfamily. RlmN family. The cofactor is [4Fe-4S] cluster.

It localises to the cytoplasm. The catalysed reaction is adenosine(2503) in 23S rRNA + 2 reduced [2Fe-2S]-[ferredoxin] + 2 S-adenosyl-L-methionine = 2-methyladenosine(2503) in 23S rRNA + 5'-deoxyadenosine + L-methionine + 2 oxidized [2Fe-2S]-[ferredoxin] + S-adenosyl-L-homocysteine. It catalyses the reaction adenosine(37) in tRNA + 2 reduced [2Fe-2S]-[ferredoxin] + 2 S-adenosyl-L-methionine = 2-methyladenosine(37) in tRNA + 5'-deoxyadenosine + L-methionine + 2 oxidized [2Fe-2S]-[ferredoxin] + S-adenosyl-L-homocysteine. Its function is as follows. Specifically methylates position 2 of adenine 2503 in 23S rRNA and position 2 of adenine 37 in tRNAs. In Desulfitobacterium hafniense (strain DSM 10664 / DCB-2), this protein is Probable dual-specificity RNA methyltransferase RlmN.